A 233-amino-acid polypeptide reads, in one-letter code: Orotidine 5'-phosphate decarboxylase (233 aa).

Substrate is bound by residues aspartate 11, lysine 34, 61 to 70 (DLKLHDIPNT), threonine 117, arginine 179, glutamine 189, glycine 209, and arginine 210. The active-site Proton donor is lysine 63.

This sequence belongs to the OMP decarboxylase family. Type 1 subfamily. As to quaternary structure, homodimer.

It catalyses the reaction orotidine 5'-phosphate + H(+) = UMP + CO2. It functions in the pathway pyrimidine metabolism; UMP biosynthesis via de novo pathway; UMP from orotate: step 2/2. Functionally, catalyzes the decarboxylation of orotidine 5'-monophosphate (OMP) to uridine 5'-monophosphate (UMP). The polypeptide is Orotidine 5'-phosphate decarboxylase (Streptococcus agalactiae serotype III (strain NEM316)).